A 533-amino-acid polypeptide reads, in one-letter code: Large neutral amino acids transporter small subunit 2 (533 aa).

The disordered stretch occupies residues 1 to 33 (MEKGTRQRNNTAKNHPDRGSDTSPEAEASSGGG). At 1–45 (MEKGTRQRNNTAKNHPDRGSDTSPEAEASSGGGGVALKKEIGLVS) the chain is on the cytoplasmic side. Residues Ser-20, Ser-23, Ser-29, and Ser-30 each carry the phosphoserine modification. Residues 46–66 (ACGIIVGNIIGSGIFVSPKGV) form a helical membrane-spanning segment. Residue Ile-54 coordinates L-leucine. The Extracellular segment spans residues 67–74 (LENAGSVG). The helical transmembrane segment at 75-96 (LALIVWIVTGVITAVGALCYAE) threads the bilayer. Residues 97–117 (LGVTIPKSGGDYSYVKDIFGG) are Cytoplasmic-facing. Residues 118–150 (LAGFLRLWIAVLVIYPTNQAVIALTFSNYVLQP) traverse the membrane as a helical segment. Position 135 (Asn-135) interacts with L-tryptophan. The Extracellular portion of the chain corresponds to 151–158 (LFPTCFPP). Residues 159 to 179 (ESGLRLLAAICLLLLTWVNCS) form a helical membrane-spanning segment. Residues 180–182 (SVR) lie on the Cytoplasmic side of the membrane. The helical transmembrane segment at 183-211 (WATRVQDIFTAGKLLALALIIIMGVVQIC) threads the bilayer. At 212–231 (KGEFFWLEPKNAFENFQEPD) the chain is on the extracellular side. The helical transmembrane segment at 232–253 (IGLVALAFLQGSFAYGGWNFLN) threads the bilayer. L-leucine is bound at residue Gly-247. Over 254–266 (YVTEELVDPYKNL) the chain is Cytoplasmic. The helical transmembrane segment at 267-288 (PRAIFISIPLVTFVYVFANIAY) threads the bilayer. Topologically, residues 289 to 313 (VTAMSPQELLASNAVAVTFGEKLLG) are extracellular. The helical transmembrane segment at 314 to 339 (VMAWIMPISVALSTFGGVNGSLFTSS) threads the bilayer. The Cytoplasmic segment spans residues 340 to 365 (RLFFAGAREGHLPSVLAMIHVKRCTP). A helical membrane pass occupies residues 366–383 (IPALLFTCLSTLLMLVTS). The Extracellular portion of the chain corresponds to 384–387 (DMYT). The helical transmembrane segment at 388–409 (LINYVGFINYLFYGVTVAGQIV) threads the bilayer. Asn-396 serves as a coordination point for L-tryptophan. Residues 410 to 424 (LRWKKPDIPRPIKIS) are Cytoplasmic-facing. The next 2 helical transmembrane spans lie at 425 to 447 (LLFPIIYLLFWAFLLIFSLWSEP) and 448 to 467 (VVCGIGLAIMLTGVPVYFLG). At 468-533 (VYWQHKPKCF…VKDPDSEEQP (66 aa)) the chain is on the cytoplasmic side. The segment at 500–533 (GDSGTEETIDDVEEQHKPIFQPTPVKDPDSEEQP) is disordered. Over residues 502–512 (SGTEETIDDVE) the composition is skewed to acidic residues. At Ser-529 the chain carries Phosphoserine.

The protein belongs to the amino acid-polyamine-organocation (APC) superfamily. L-type amino acid transporter (LAT) (TC 2.A.3.8) family. Disulfide-linked heterodimer composed of the catalytic light chain subunit SLC7A8 and the heavy chain subunit SLC3A2. SLC3A2 acts as a chaperone for correct plasma membrane trafficking and stabilization of SLC7A8 and modulates the substrate affinity and specificity of SLC7A8. ICAM-1 associates with the heterodimer SLC3A2/SLC7A8; facilitates leucine uptake. Expression is seen in jejunum mucosa and the epithelial cells of the jejunum, ileum and colon, as well as in kidney, placenta, brain, testis and skeletal muscle. Expressed in retina, inner blood-retinal barrier of retina, retinal vascular endothelial cells. Also expressed in the intestinal epithelial cell line IEC-6 and in the retinal capillary endothelial cell line TR-iBRB2.

It is found in the cell membrane. The protein resides in the basolateral cell membrane. The enzyme catalyses L-dopa(out) + L-phenylalanine(in) = L-dopa(in) + L-phenylalanine(out). It catalyses the reaction 3,3'-diiodo-L-thyronine(out) = 3,3'-diiodo-L-thyronine(in). It carries out the reaction L-histidine(in) + L-phenylalanine(out) = L-histidine(out) + L-phenylalanine(in). The catalysed reaction is L-tryptophan(in) + L-phenylalanine(out) = L-tryptophan(out) + L-phenylalanine(in). The enzyme catalyses L-isoleucine(in) + L-phenylalanine(out) = L-isoleucine(out) + L-phenylalanine(in). It catalyses the reaction L-valine(in) + L-phenylalanine(out) = L-valine(out) + L-phenylalanine(in). It carries out the reaction L-leucine(in) + L-phenylalanine(out) = L-leucine(out) + L-phenylalanine(in). The catalysed reaction is L-glutamine(in) + L-phenylalanine(out) = L-glutamine(out) + L-phenylalanine(in). The enzyme catalyses L-cysteine(in) + L-phenylalanine(out) = L-cysteine(out) + L-phenylalanine(in). It catalyses the reaction L-phenylalanine(out) + L-methionine(in) = L-phenylalanine(in) + L-methionine(out). It carries out the reaction L-leucine(out) + L-methionine(in) = L-leucine(in) + L-methionine(out). The catalysed reaction is L-cysteine(out) + L-methionine(in) = L-cysteine(in) + L-methionine(out). The enzyme catalyses S-methylmercury-L-cysteine(out) + L-methionine(in) = S-methylmercury-L-cysteine(in) + L-methionine(out). It catalyses the reaction S-methylmercury-L-cysteine(in) + L-leucine(out) = S-methylmercury-L-cysteine(out) + L-leucine(in). It carries out the reaction S-methylmercury-L-cysteine(in) + L-phenylalanine(out) = S-methylmercury-L-cysteine(out) + L-phenylalanine(in). The catalysed reaction is L-phenylalanine(out) + L-serine(in) = L-phenylalanine(in) + L-serine(out). The enzyme catalyses L-phenylalanine(out) + glycine(in) = L-phenylalanine(in) + glycine(out). It catalyses the reaction L-phenylalanine(out) + L-alanine(in) = L-phenylalanine(in) + L-alanine(out). It carries out the reaction 3,3',5-triiodo-L-thyronine(out) = 3,3',5-triiodo-L-thyronine(in). Leucine transport activity is inhibited by 2-amino-bicyclo-(2,2,1)-heptane-2-carboxylate (BCH), glycine, L-isomers of the neutral amino acids and histidine. Associates with SLC3A2 to form a functional heterodimeric complex that translocates small and large neutral amino acids with broad specificity and a stoichiometry of 1:1. Functions as amino acid antiporter mediating the influx of extracellular essential amino acids mainly in exchange with the efflux of highly concentrated intracellular amino acids. Has relatively symmetrical selectivities but strongly asymmetrical substrate affinities at both the intracellular and extracellular sides of the transporter. This asymmetry allows SLC7A8 to regulate intracellular amino acid pools (mM concentrations) by exchange with external amino acids (uM concentration range), equilibrating the relative concentrations of different amino acids across the plasma membrane instead of mediating their net uptake. May play an essential role in the reabsorption of neutral amino acids from the epithelial cells to the bloodstream in the kidney. Involved in the uptake of methylmercury (MeHg) when administered as the L-cysteine or D,L-homocysteine complexes, and hence plays a role in metal ion homeostasis and toxicity. Involved in the cellular activity of small molecular weight nitrosothiols, via the stereoselective transport of L-nitrosocysteine (L-CNSO) across the transmembrane. Imports the thyroid hormone diiodothyronine (T2) and to a smaller extent triiodothyronine (T3) but not rT 3 or thyroxine (T4). Mediates the uptake of L-DOPA. May participate in auditory function. The sequence is that of Large neutral amino acids transporter small subunit 2 (Slc7a8) from Rattus norvegicus (Rat).